We begin with the raw amino-acid sequence, 121 residues long: Neuropeptide-like protein 7 (121 aa).

A signal peptide spans 1-22 (MYIKAALLIVVLFGVASQITSA).

May regulate lifespan in response to food availability and oxidative stress. This is Neuropeptide-like protein 7 from Caenorhabditis elegans.